Consider the following 250-residue polypeptide: C-X-C motif chemokine 16 (250 aa).

Residues 1 to 24 (MPLWELWFFLLALFLAWLTPPGNG) form the signal peptide. Residues 25 to 200 (NEGSMAGSCP…NVGATAGTSA (176 aa)) are Extracellular-facing. 2 disulfide bridges follow: cysteine 33–cysteine 63 and cysteine 35–cysteine 77. The disordered stretch occupies residues 105 to 186 (VAHQQHLAPQ…AKSEARENQE (82 aa)). Composition is skewed to polar residues over residues 128–147 (DSSTPAQTNLPSTLQPTQKP) and 163–172 (TSETDTSTVG). Residues 201–221 (LVPVLSLLVIIFLLTGVLLYV) traverse the membrane as a helical segment. Over 222–250 (MCKKRQEQSRQYPPDPQLHYVPVASNINT) the chain is Cytoplasmic.

This sequence belongs to the intercrine alpha (chemokine CxC) family. Glycosylated.

It localises to the membrane. Its function is as follows. Induces a strong chemotactic response. Induces calcium mobilization. Binds to CXCR6/Bonzo. Also acts as a scavenger receptor on macrophages, which specifically binds to OxLDL (oxidized low density lipoprotein), suggesting that it may be involved in pathophysiology such as atherogenesis. The polypeptide is C-X-C motif chemokine 16 (CXCL16) (Sus scrofa (Pig)).